An 88-amino-acid polypeptide reads, in one-letter code: Small ribosomal subunit protein uS17 (88 aa).

This sequence belongs to the universal ribosomal protein uS17 family. Part of the 30S ribosomal subunit.

Functionally, one of the primary rRNA binding proteins, it binds specifically to the 5'-end of 16S ribosomal RNA. In Dechloromonas aromatica (strain RCB), this protein is Small ribosomal subunit protein uS17.